A 499-amino-acid chain; its full sequence is Protein adenylyltransferase Fic (499 aa).

The chain crosses the membrane as a helical span at residues 38–58 (FHYFVIFASGSLFSGLMFGLL). TPR repeat units lie at residues 126 to 159 (ALSS…SPKH) and 160 to 194 (PEIL…NPSH). The short motif at 251–256 (SVGIEG) is the Inhibitory (S/T)XXXE(G/N) motif element. ATP contacts are provided by residues Glu255 and 337 to 340 (VGGH). A Fido domain is found at 306-441 (ITLKDILEIH…IRPFVRFIAD (136 aa)). The active site involves His384. Residues 388 to 395 (DGNGRTSR), 420 to 421 (YY), and Asn428 each bind ATP.

It belongs to the fic family. Homodimer.

Its subcellular location is the membrane. It catalyses the reaction L-tyrosyl-[protein] + ATP = O-(5'-adenylyl)-L-tyrosyl-[protein] + diphosphate. The catalysed reaction is L-threonyl-[protein] + ATP = 3-O-(5'-adenylyl)-L-threonyl-[protein] + diphosphate. The enzyme catalyses 3-O-(5'-adenylyl)-L-threonyl-[protein] + H2O = L-threonyl-[protein] + AMP + H(+). With respect to regulation, the side chain of Glu-255 determines which of the two opposing activities (AMPylase or de-AMPylase) will take place. In response to endoplasmic reticulum stress, mediates de-AMPylase activity. Adenylyltransferase activity is inhibited by the inhibitory helix present at the N-terminus: Glu-255 binds ATP and competes with ATP-binding at Arg-395, thereby preventing adenylyltransferase activity. In unstressed cells, disengagement of Glu-255 promotes adenylyltransferase activity. Activation dissociates ATP-binding from Glu-255, allowing ordered binding of the entire ATP moiety with the alpha-phosphate in an orientation that is productive for accepting an incoming target hydroxyl side chain. Protein that can both mediate the addition of adenosine 5'-monophosphate (AMP) to specific residues of target proteins (AMPylation), and the removal of the same modification from target proteins (de-AMPylation), depending on the context. The side chain of Glu-255 determines which of the two opposing activities (AMPylase or de-AMPylase) will take place. Acts as a key regulator of the unfolded protein response (UPR) by mediating AMPylation or de-AMPylation of Hsc70-3/BiP. In unstressed cells, acts as an adenylyltransferase by mediating AMPylation of Hsc70-3/BiP at 'Thr-518', thereby inactivating it. In response to endoplasmic reticulum stress, acts as a phosphodiesterase by mediating removal of ATP (de-AMPylation) from Hsc70-3/BiP at 'Thr-518', leading to restore HSPA5/BiP activity. This is Protein adenylyltransferase Fic from Aedes aegypti (Yellowfever mosquito).